Consider the following 225-residue polypeptide: Membrane protein LapB (225 aa).

It to H.influenzae HI_1119.

Its subcellular location is the cell membrane. This is Membrane protein LapB (lapB) from Mannheimia haemolytica (Pasteurella haemolytica).